Consider the following 963-residue polypeptide: Collagen alpha-1(I) chain (963 aa).

The segment at 1-963 (GPMGPSGPRG…PGPPGPPGPP (963 aa)) is disordered. The segment covering 40-54 (NGDDGEAGKPGRPGE) has biased composition (basic and acidic residues). Position 82 is a phosphoserine (Ser82). Low complexity-rich tracts occupy residues 90–106 (DAGP…PGEN) and 129–142 (PAGA…TGAA). Pro residues predominate over residues 144–156 (PPGPTGPAGPPGF). Positions 190 to 229 (AGAAGPAGNPGADGQPGAKGANGAPGIAGAPGFPGARGPS) are enriched in low complexity. Positions 296-305 (GERGGPGARG) are enriched in gly residues. 6 stretches are compositionally biased toward low complexity: residues 313-337 (AGPK…PGEA), 349-375 (KGIT…QDGR), 384-403 (ARGQ…AGEP), 482-495 (PRGA…DGAK), 555-569 (SGPS…ARGA), and 582-609 (AGFA…KGDA). Phosphoserine is present on Ser558. The segment covering 611-623 (PPGPAGPTGPPGP) has biased composition (pro residues). 3 stretches are compositionally biased toward low complexity: residues 638–654 (SAGP…AGRV), 683–692 (ETGPAGRPGE), and 702–726 (AGEK…QGIA). 2 stretches are compositionally biased toward pro residues: residues 767–777 (PPGPVGPPGIA) and 813–828 (AGPP…PGPV). A compositionally biased stretch (low complexity) spans 849 to 863 (IGPVGARGPAGPQGP). Positions 864–878 (RGDKGETGEQGDRGI) are enriched in basic and acidic residues. The segment covering 897–930 (PGEQGPSGASGPAGPRGPPGSAGAPGKDGINGIP) has biased composition (low complexity). Pro residues predominate over residues 948-963 (VGPPGPPGPPGPPGPP).

It belongs to the fibrillar collagen family. As to quaternary structure, trimers of one alpha 2(I) and two alpha 1(I) chains. In terms of processing, prolines at the third position of the tripeptide repeating unit (G-X-Y) are hydroxylated in some or all of the chains. Forms the fibrils of tendon, ligaments and bones. In bones, the fibrils are mineralized with calcium hydroxyapatite.

It localises to the secreted. The protein localises to the extracellular space. Its subcellular location is the extracellular matrix. In terms of biological role, type I collagen is a member of group I collagen (fibrillar forming collagen). The sequence is that of Collagen alpha-1(I) chain from Tapirus terrestris (Lowland tapir).